The chain runs to 84 residues: MKVVLLVCLVWMMAMMELVSCECWSQADCSDGHCCAGSSFSKNCRPYGGDGEQCEPRNKYEAYSTGCPCEENLMCSVINRCQSA.

The N-terminal stretch at methionine 1–cysteine 21 is a signal peptide. 5 cysteine pairs are disulfide-bonded: cysteine 23-cysteine 35, cysteine 29-cysteine 44, cysteine 34-cysteine 67, cysteine 54-cysteine 75, and cysteine 69-cysteine 81.

The protein belongs to the AVIT (prokineticin) family. In terms of tissue distribution, expressed by the venom gland.

The protein resides in the secreted. This is U8-theraphotoxin-Hhn1f from Cyriopagopus hainanus (Chinese bird spider).